The chain runs to 442 residues: C4-dicarboxylate transport protein 4 (442 aa).

A run of 6 helical transmembrane segments spans residues 20–40, 53–73, 90–110, 160–180, 209–229, and 233–253; these read ILYV…YFYP, FIAL…VHGI, LIYF…VGEV, GDLL…AFLG, PVGA…GSLL, and ALIG…LGAI.

This sequence belongs to the dicarboxylate/amino acid:cation symporter (DAACS) (TC 2.A.23) family.

The protein resides in the cell inner membrane. In terms of biological role, responsible for the transport of dicarboxylates such as succinate, fumarate, and malate from the periplasm across the membrane. The protein is C4-dicarboxylate transport protein 4 of Bradyrhizobium diazoefficiens (strain JCM 10833 / BCRC 13528 / IAM 13628 / NBRC 14792 / USDA 110).